A 26-amino-acid chain; its full sequence is Muscarinic toxin-like protein 1 (26 aa).

It belongs to the three-finger toxin family. Short-chain subfamily. Orphan group VIII (haditoxin) sub-subfamily. Homodimer; non-covalently linked. Expressed by the venom gland.

Its subcellular location is the secreted. Its function is as follows. Antagonist of muscle and neuronal nicotinic acetylcholine receptors (nAChR) with highest affinity for neuronal alpha-7/CHRNA7 nAChRs. The chain is Muscarinic toxin-like protein 1 from Naja naja (Indian cobra).